Consider the following 345-residue polypeptide: S-adenosylmethionine:tRNA ribosyltransferase-isomerase (345 aa).

Belongs to the QueA family. As to quaternary structure, monomer.

The protein resides in the cytoplasm. The enzyme catalyses 7-aminomethyl-7-carbaguanosine(34) in tRNA + S-adenosyl-L-methionine = epoxyqueuosine(34) in tRNA + adenine + L-methionine + 2 H(+). It participates in tRNA modification; tRNA-queuosine biosynthesis. Its function is as follows. Transfers and isomerizes the ribose moiety from AdoMet to the 7-aminomethyl group of 7-deazaguanine (preQ1-tRNA) to give epoxyqueuosine (oQ-tRNA). This chain is S-adenosylmethionine:tRNA ribosyltransferase-isomerase, found in Shewanella sp. (strain MR-4).